The chain runs to 1645 residues: MADGEHTLPADEELFEQPPLQQQQPEIAEPIVMAQEPIQGVSEDPQASEATHEAPDNYPVDHQMENQEFYQEPQIPEPQQIPQIPVFQPAAYNPPNYVAPQQRANNFGEPAAAADSRPLTEEEQLAAERPTEDTVWIDSDDDTDVEEAILRANFWLPYSDHNYDPPDPADRIILPTEGPFPCIAGLDEDCNIVKQWMPEDAVGPGSPGTQYRRNQQTGGGLPSTSVAPQQQQLPVRHNIQNRPMVAAQPFSIGGNQVEYGGIGGMDSRMQQRGVVRDGPQYRVMNDFGNGLPMRGQLPPRNSPAANAINRVREQQQQMYHQAGARGSLQQRVPAPAAPTPGSYQHIVNAVPVGGANPMRRVPPQARPGMIGGAANNNRARPIHVTRPMDTQEFEHPVAPAAAAPPRRVVDVAPHRMTPEQRQELQQMNRQRAAPQFPAAAAQRSAEKIVIQQRPGASSSRAPRPSMAQEDLLRSPTRRLSERVPQEHQTPVLEPRRFQVKVTDTYSTPIPKASDQLPAQLTEEDPPEESAAAAAPEDVPDAAPEDPPKGILKPTPPHRMTQEEKNAHFARLTTDKEKPTSSASILPQDAAPPHVPPPPPPPLVLRPHHQDETLAMVQSVFESKPRQPDTPKDKEAISKIADLLRFSADEFTGQSGSSAAARQRTVSGSAARAQTYQMHHQQQQQHHHQMPMDQRKRHSSGRYDALMGAMPLQQQPPPPPPSQFQHTDSIAHRPRGRPKGTRHPSVAVQPQRSGGARTLPPRAQTVAMSARNGANAKNSDSESEGIDEAAEESWTMRCHCGMDHGDGDTIECEGCKTWQHMACMGLTLKSNTSKYKCEMCLPRRLPVSKAEAAREQERILNRLRAAAKKQKRKSEPVEQKQKSQPSTSRKSAPMALQQQPAEPRVAQLNDYSKQASALLFGMEQTAGADTLLAESRLHKKARRMFVEEAVEALVTTDLVQIRQVILEVNGHVSMSNEVKRQPGGGNCIFMYDGLMKGTAGEDMGDGQELVCIDTKRKGNDTKFTRRSCVPNCVLKHVLGSNATLGIMIVATKDITRNTEVTLPFDADWRESEVELECAEHMKELQACPFESERRRFAAERHRAMDHKKREAEEARRADEERRRLEEEVRRERAAKTKQMDEAEKARLEAEKAAEKEKKAKEREEAKERKKMEVEASAAAAPESSNSITAREERRIQQAEEMFRRQEEEGKRKEARRRSKSVTPGVLEAAGTAAREDAPEASIPAPAPSPPASRRSVSRTTQPSTSSFATPTEPPAKNKRMRSVVPPKSEPASSAKRVRATTVATPKDTTASNDSRKRKSSATGKTPVAKRSKNVVPTSFGLALIEKELREQARDSTVLEMILPDYIMKEKRSGLLAGQSPDFSEVRAQIEEENRMKERFTKREAKKKAVEKAKEKEKKEHRKEPKKANEPGPAPKSEKAVEKAVEKVEKKPKSPQKPPAKPTAQKPPLKKTEEVDGIEREASESSSKESSVAPEEKKNPKKITFAEYNSRRSQKREAGECSTPPAVTRRGFIPSTEGEDLVNVELSAIPLDDHPSSSNTAPTTTIAPSVGGAPKPTSVVVKSPSTRSRTRGAASESVDDAPAEHSMSLQDRVFSMFGSTVDAPAPPPPPPASAETNSRRSRSTRWN.

5 disordered regions span residues 1–82 (MADG…QQIP), 109–132 (EPAA…RPTE), 200–228 (DAVG…SVAP), 417–606 (TPEQ…VLRP), and 651–789 (TGQS…DEAA). 2 stretches are compositionally biased toward low complexity: residues 16–31 (EQPP…AEPI) and 67–82 (QEFY…QQIP). Residues 207–228 (PGTQYRRNQQTGGGLPSTSVAP) show a composition bias toward polar residues. Composition is skewed to low complexity over residues 429–443 (RQRA…AAQR) and 453–467 (RPGA…PSMA). The span at 559-578 (MTQEEKNAHFARLTTDKEKP) shows a compositional bias: basic and acidic residues. The span at 592 to 603 (PHVPPPPPPPLV) shows a compositional bias: pro residues. Positions 651 to 675 (TGQSGSSAAARQRTVSGSAARAQTY) are enriched in polar residues. Basic residues-rich tracts occupy residues 684 to 699 (QHHH…RHSS) and 731 to 741 (HRPRGRPKGTR). Residues 780–789 (SESEGIDEAA) show a composition bias toward acidic residues. The PHD-type zinc-finger motif lies at 794–842 (TMRCHCGMDHGDGDTIECEGCKTWQHMACMGLTLKSNTSKYKCEMCLPR). A disordered region spans residues 865–904 (AAKKQKRKSEPVEQKQKSQPSTSRKSAPMALQQQPAEPRV). The span at 881-899 (KSQPSTSRKSAPMALQQQP) shows a compositional bias: polar residues. An SET domain is found at 973-1064 (MSNEVKRQPG…RNTEVTLPFD (92 aa)). Residues 1099–1172 (RHRAMDHKKR…EAKERKKMEV (74 aa)) are compositionally biased toward basic and acidic residues. Disordered regions lie at residues 1099–1333 (RHRA…SKNV), 1371–1536 (SGLL…STEG), and 1548–1645 (PLDD…TRWN). Residues 1103–1217 (MDHKKREAEE…GKRKEARRRS (115 aa)) are a coiled coil. Positions 1173 to 1183 (EASAAAAPESS) are enriched in low complexity. A compositionally biased stretch (basic and acidic residues) spans 1188–1210 (AREERRIQQAEEMFRRQEEEGKR). Polar residues-rich tracts occupy residues 1258–1268 (TTQPSTSSFAT) and 1300–1311 (TVATPKDTTASN). Basic and acidic residues-rich tracts occupy residues 1382–1427 (SEVR…KKAN), 1434–1450 (KSEK…EKKP), and 1468–1485 (KKTE…ESSS). Positions 1554-1565 (SSSNTAPTTTIA) are enriched in polar residues.

It belongs to the class V-like SAM-binding methyltransferase superfamily. In terms of tissue distribution, expressed both in the germline and in somatic tissues.

The protein localises to the nucleus. The enzyme catalyses L-lysyl(9)-[histone H3] + 3 S-adenosyl-L-methionine = N(6),N(6),N(6)-trimethyl-L-lysyl(9)-[histone H3] + 3 S-adenosyl-L-homocysteine + 3 H(+). Its function is as follows. Histone methyltransferase that mediates trimethylation of 'Lys-9' of histone H3 in vitro. Involved in transcriptional regulation. Plays a role in the negative regulation of lifespan and in heat resistance. Together with set-9, negatively regulates lifespan in a germline-independent, partially daf-16-dependent fashion. Together with set-9, plays a role in germline development and maintenance and might play a role in the restriction of the trimethylation mark on histone H3 'Lys-4'(H3K4me3) to target genes specifically in the germline. Together with spr-5, required for transgenerational fertility. This is Histone-lysine N-methyltransferase set-26 from Caenorhabditis elegans.